The primary structure comprises 335 residues: Phenylalanine--tRNA ligase alpha subunit (335 aa).

E262 contacts Mg(2+).

The protein belongs to the class-II aminoacyl-tRNA synthetase family. Phe-tRNA synthetase alpha subunit type 1 subfamily. In terms of assembly, tetramer of two alpha and two beta subunits. Mg(2+) is required as a cofactor.

The protein localises to the cytoplasm. The enzyme catalyses tRNA(Phe) + L-phenylalanine + ATP = L-phenylalanyl-tRNA(Phe) + AMP + diphosphate + H(+). The sequence is that of Phenylalanine--tRNA ligase alpha subunit from Prochlorococcus marinus (strain MIT 9313).